A 104-amino-acid chain; its full sequence is Histone H4 (104 aa).

Positions 1–21 (MAGRGKVGKGYGKVGAKRHTK) are disordered.

The protein belongs to the histone H4 family. In terms of assembly, the nucleosome is a histone octamer containing two molecules each of H2A, H2B, H3 and H4 assembled in one H3-H4 heterotetramer and two H2A-H2B heterodimers. The octamer wraps approximately 147 bp of DNA.

The protein resides in the nucleus. It localises to the chromosome. Its function is as follows. Core component of nucleosome. Nucleosomes wrap and compact DNA into chromatin, limiting DNA accessibility to the cellular machineries which require DNA as a template. Histones thereby play a central role in transcription regulation, DNA repair, DNA replication and chromosomal stability. DNA accessibility is regulated via a complex set of post-translational modifications of histones, also called histone code, and nucleosome remodeling. The sequence is that of Histone H4 from Sterkiella nova (Ciliate).